Consider the following 221-residue polypeptide: Nuclear phosphoprotein UL3 homolog (221 aa).

It belongs to the alphaherpesvirinae HHV-1 UL3 family. In terms of processing, phosphorylated.

It is found in the host nucleus. This Varicella-zoster virus (strain Dumas) (HHV-3) protein is Nuclear phosphoprotein UL3 homolog.